Reading from the N-terminus, the 287-residue chain is Aquaporin PIP1-1 (287 aa).

The next 2 helical transmembrane spans lie at 57–77 and 92–114; these read IAEF…VMGV and IAWS…SGHI. The short motif at 115–117 is the NPA 1 element; it reads NPA. 3 consecutive transmembrane segments (helical) span residues 134–154, 176–196, and 210–230; these read VFYI…VKGF, GDGL…VFSA, and ILAP…TMGI. Positions 236-238 match the NPA 2 motif; sequence NPA. A helical transmembrane segment spans residues 258–278; it reads IFWVGPFIGAALAAIYHQVII.

This sequence belongs to the MIP/aquaporin (TC 1.A.8) family. PIP (TC 1.A.8.11) subfamily. May interact with PIP1-2 to form heteromers. As to expression, highly expressed in roots, shoots and developing tassels, and at lower levels in leaves.

It localises to the cell membrane. Its function is as follows. Water channel required to facilitate the transport of water across cell membrane. Active as heteromers with PIP1-2, but not as homomers. In Zea mays (Maize), this protein is Aquaporin PIP1-1 (PIP1-1).